The chain runs to 194 residues: Holliday junction branch migration complex subunit RuvA (194 aa).

The tract at residues 1–64 is domain I; sequence MIGRLRGILA…EDSVSLYGFL (64 aa). The segment at 65-140 is domain II; it reads REGERRLFRD…RAADFSSGAP (76 aa). The segment at 140–144 is flexible linker; sequence PITGQ. Positions 145 to 194 are domain III; the sequence is LGPDAVSEATVALQQLGYKPAEAARMAREAGAEGDEVATVIRKALQAALR.

Belongs to the RuvA family. In terms of assembly, homotetramer. Forms an RuvA(8)-RuvB(12)-Holliday junction (HJ) complex. HJ DNA is sandwiched between 2 RuvA tetramers; dsDNA enters through RuvA and exits via RuvB. An RuvB hexamer assembles on each DNA strand where it exits the tetramer. Each RuvB hexamer is contacted by two RuvA subunits (via domain III) on 2 adjacent RuvB subunits; this complex drives branch migration. In the full resolvosome a probable DNA-RuvA(4)-RuvB(12)-RuvC(2) complex forms which resolves the HJ.

It localises to the cytoplasm. Functionally, the RuvA-RuvB-RuvC complex processes Holliday junction (HJ) DNA during genetic recombination and DNA repair, while the RuvA-RuvB complex plays an important role in the rescue of blocked DNA replication forks via replication fork reversal (RFR). RuvA specifically binds to HJ cruciform DNA, conferring on it an open structure. The RuvB hexamer acts as an ATP-dependent pump, pulling dsDNA into and through the RuvAB complex. HJ branch migration allows RuvC to scan DNA until it finds its consensus sequence, where it cleaves and resolves the cruciform DNA. This Xanthomonas campestris pv. campestris (strain 8004) protein is Holliday junction branch migration complex subunit RuvA.